The sequence spans 355 residues: Putative [LysW]-L-2-aminoadipate/[LysW]-L-glutamate phosphate reductase (355 aa).

Residue serine 13–threonine 16 coordinates NADP(+). Cysteine 153 is a catalytic residue. Asparagine 323 is an NADP(+) binding site.

Belongs to the NAGSA dehydrogenase family. Type 1 subfamily. LysY sub-subfamily.

It localises to the cytoplasm. The enzyme catalyses [amino-group carrier protein]-C-terminal-N-(1-carboxy-5-oxopentan-1-yl)-L-glutamine + phosphate + NADP(+) = [amino-group carrier protein]-C-terminal-N-(1-carboxy-5-phosphooxy-5-oxopentan-1-yl)-L-glutamine + NADPH + H(+). It catalyses the reaction [amino-group carrier protein]-C-terminal-gamma-(L-glutamyl-5-semialdehyde)-L-glutamate + phosphate + NADP(+) = [amino-group carrier protein]-C-terminal-gamma-(5-phospho-L-glutamyl)-L-glutamate + NADPH + H(+). It functions in the pathway amino-acid biosynthesis; L-lysine biosynthesis via AAA pathway; L-lysine from L-alpha-aminoadipate (Thermus route): step 3/5. It participates in amino-acid biosynthesis; L-arginine biosynthesis. Functionally, involved in both the arginine and lysine biosynthetic pathways. The sequence is that of Putative [LysW]-L-2-aminoadipate/[LysW]-L-glutamate phosphate reductase from Aeropyrum pernix (strain ATCC 700893 / DSM 11879 / JCM 9820 / NBRC 100138 / K1).